Reading from the N-terminus, the 1407-residue chain is DNA-directed RNA polymerase subunit beta' (1407 aa).

The Zn(2+) site is built by Cys-70, Cys-72, Cys-85, and Cys-88. Residues Asp-460, Asp-462, and Asp-464 each coordinate Mg(2+). Residues Cys-814, Cys-888, Cys-895, and Cys-898 each coordinate Zn(2+).

It belongs to the RNA polymerase beta' chain family. In terms of assembly, the RNAP catalytic core consists of 2 alpha, 1 beta, 1 beta' and 1 omega subunit. When a sigma factor is associated with the core the holoenzyme is formed, which can initiate transcription. Requires Mg(2+) as cofactor. Zn(2+) is required as a cofactor.

The catalysed reaction is RNA(n) + a ribonucleoside 5'-triphosphate = RNA(n+1) + diphosphate. DNA-dependent RNA polymerase catalyzes the transcription of DNA into RNA using the four ribonucleoside triphosphates as substrates. This Cellvibrio japonicus (strain Ueda107) (Pseudomonas fluorescens subsp. cellulosa) protein is DNA-directed RNA polymerase subunit beta'.